The following is a 247-amino-acid chain: 2-amino-5-formylamino-6-ribosylaminopyrimidin-4(3H)-one 5'-monophosphate deformylase (247 aa).

Residues glutamate 41, histidine 43, aspartate 52, and histidine 121 each coordinate Fe cation.

The protein belongs to the creatininase superfamily. FAPy deformylase family. Homodimer. Requires Fe(2+) as cofactor. The cofactor is Zn(2+).

It catalyses the reaction 2-amino-5-formylamino-6-(5-phospho-D-ribosylamino)pyrimidin-4(3H)-one + H2O = 2,5-diamino-6-(1-D-ribosylamino)pyrimidin-4(3H)-one 5'-phosphate + formate + H(+). The protein operates within cofactor biosynthesis; coenzyme F420 biosynthesis. Its pathway is cofactor biosynthesis; riboflavin biosynthesis. In terms of biological role, catalyzes the hydrolysis of the formamide of 2-amino-5-formylamino-6-ribosylamino-4(3H)-pyrimidinone 5'-monophosphate (FAPy) to form 2,5-diamino-6-ribosylamino-4(3H)-pyrimidinone 5'-phosphate (APy). This chain is 2-amino-5-formylamino-6-ribosylaminopyrimidin-4(3H)-one 5'-monophosphate deformylase, found in Methanothermus fervidus (strain ATCC 43054 / DSM 2088 / JCM 10308 / V24 S).